Consider the following 2555-residue polypeptide: MPQQPEIQDIYPLSFMQEGMLFHSLYDEQSRAYFEQASFTIHGQLDLERFQKSMDAVFDRYDIFRTAFIYKNVAKPRQVVLKQRHCPIHIEDISHLNERDKEHCTEAFKEQDKSKGFDLQTDVLMRISILKWAPDHYVCIWSHHHILMDGWCLGIVIKDFLHIYQALGKGQLPDLPPVQPYGTYIKWLMQQDREEAAEYWKKRLQHFEKSTPLPKRTDQIPNGTLQQITFAIPEKETAELQKIAAASGATLNTVFQALWGIMLQKVNRSSDAVFGSVISGRPSELKDVENMVGLFINTIPIRAQSDSLSFSDLVRRMQKDMNEAEAYSYFPLYDIQAQSALKQELIDHIIVFENTPTQQEIEELNQAGSFDFSVKDFEMEEVTNYSCSVKVIPGRTLYVRIHFQTSAYQPSMMSEIKDYLLHMVSDVISDPSLPVSKMTLLDEDKTRKIVSQNNRTVSVSPEAPTLHGLFERQAAVTPERLAIRFSGGSLTYAELDMYASRLAAHLAARGVTNESIVGVLSERSPDMLIAVLAVLKAGGAYLPLDPAYPKERLSYMLKDSGASLLLTQPGCSAPNFSGETLEVDMTSLECEEVKRHVSASVSDGSLAYVIYTSGSTGQPKGVAVEHRQAVSFLTGMQHQFRLSEDDIVMVKTSFSFDASVWQLFWWALSGASAYLLPPGWEKDSALIVQAIHQENVTTAHFIPAMLNSFLDQAEIERLSDRTSLKRVFAGGEPLAPRTAARFASVLPQVSLIHGYGPTEATVDAAFYVLDPERDRDRLRIPIGKPVPGARLYVLDPHLAVQPSGVAGELYIAGAGVARGYLNRPALTEERFLEDPFYLGERMYKTGDVARWLPDGNVEFLGRTDDQVKIRGYRIEPGEIEAALRSIEGVREAAVTVRTDSGEPELCAYVEGLQRNEVRAQLQRLLPGYMVPAYMIEMEQWPVTPSGKLDRNALPAPGGAADAETYTAPRNVTEMKLSQLWEDVLKNGPVGIHDNFFDRGGHSLKATALVSRIAKEFDVQVPLKDVFAHPTVEGLATVIREGTDSPYEAIKPAEKQETYPVSSAQKRIYVLQQLEDGGTGYNMPAVLELEGKLNLERMDRAFKELIKRHESLRTAFEQDAGGDPVQRIHDEVPFTLQTTVLGARTEEEAAAAFIKPFDLSQAPLFRAQIVKVSDERHLLLVDMHHIISDGVSVNILIREFGELYNNRKLPALRIQYKDYAVWQEGFKTGDAYKTQGAYWLKQLEGELPVLDLPADHARPPMRSFAGDKVSFTLDQEVTSGLYKLARENGSTLYMVLLAAYTAFLSRLSGQEDIIVGSPIAGRPHKDLEPILGMFVNTLALRTRPEGGKPFVQYLQEVRETAMEAFEHQDYPFEELVDKLELTRDMSRNPLFDVMFVLQNMDQESLELDELCLKPAANNGHQTSKFDLTLYAQEQPRGLLTFQMEFSTDLYKKKTIEKWLQYFNNMLLSIIKDNKAALGTINILNEDEAHYLIHELNRTKIDYPRNETISRLFEMQAEQTPNAVAIVSDTQVFTYEDLNSWANQIASVLQIKGVGPDSVVALLTGRTPELIAGMLGILKAGGAYLPIDSNLPVERIAYMLSDSRAALLLQSEKTEKRLLGIECEQIIIEDIQKQGEAKNVESSAGPHSLAYIIYTSGSTGKPKGVMIEQRSVIRLVKNSNYITFTPEDRLLMTSSIGFDVGSFEIFGPLLNGAALHLSDQQTFLDSHQLKRYIEHQGITTIWLTSSLFNHLTEQNEQTFSQLKHLIIGGEALSPSHVNRIRNVCPEVSIWNGYGPTENTTFSTCLHIQKTYELSIPIGRPVGNSTAFILNQWGVLQPVGAVGELCVGGDGVARGYLGRPDLTKEKFVPHPFAPGDRLYRTGDLARWLSDGTIEYVGRIDDQVKVRGYRVELGEIETALRQIDGVKEAAVLARTAQTGSKELFGYISVKAGTNAEQVRSLLARSLPNYMIPAYIIEMETLPLTSNGKLNRKALPEPDVASKQTYIPPRNELEEQLALIWQEVLGIQRIGIEDSFFELGGDSIKALQVSARLGRYGLSLQVSDLFRHPKIKDLSPFIRKSERIIEQGPIQGDVPWTPVQQWFFSQDIEERHHFNQSVMLFHSGRLSENALRPALKKLAEHHDALRMVYRNDDRRWIQINQGIHESQLYSLRISDLSQSESGWETKIKQEVADLQQSINLQEGPLLHAALFKTLTGDYLFLAIHHLVVDGVSWRILLEDLSAGYQQAAAGQTIQLPPKTDSYQEYARRIQEYAQSSKLIREEAYWRSVEEQQAAELPYEIPHHVNIDFSKRDSLSFSLTEADTAVLLQNVNHAYGTDTQDILLTAASLAICEWTGGSKLRIAMEGHGREHILPELDISRTVGWFTSMYPALISFENHRDELGTSVKTVKDTLGRIPNKGVGYGMLKYLTHPENKSITFSKTPEISFNYLGQFNDIERQDTFRPSSLGSGKDITHTWKREQIIEMSAMAADKKLHFNLSYPPARFHRNTMEQLINRIEHFLLDIMKHCAGQQKAEKTLSDFSSQSLTAEDLDSISSLVEEL.

A condensation 1 region spans residues 7 to 306; that stretch reads IQDIYPLSFM…NTIPIRAQSD (300 aa). The interval 491–894 is adenylation 1; the sequence is TYAELDMYAS…SIEGVREAAV (404 aa). One can recognise a Carrier 1 domain in the interval 967–1042; sequence APRNVTEMKL…GLATVIREGT (76 aa). Position 1002 is an O-(pantetheine 4'-phosphoryl)serine (Ser1002). The tract at residues 1054-1344 is condensation 2; it reads KQETYPVSSA…NTLALRTRPE (291 aa). The interval 1532–1927 is adenylation 2; that stretch reads TYEDLNSWAN…QIDGVKEAAV (396 aa). One can recognise a Carrier 2 domain in the interval 2003-2077; the sequence is PPRNELEEQL…DLSPFIRKSE (75 aa). Ser2038 carries the O-(pantetheine 4'-phosphoryl)serine modification. The interval 2085–2548 is epimerization 3; sequence IQGDVPWTPV…SLTAEDLDSI (464 aa).

It belongs to the ATP-dependent AMP-binding enzyme family. Requires pantetheine 4'-phosphate as cofactor.

In terms of biological role, this protein is a multifunctional enzyme, able to activate and polymerize the amino acids Glu and Ala/Val as part of the biosynthesis of the lipopeptide antibiotic plipastatin. The Ala/Val residue is further epimerized to the D-isomer form. The activation sites for these amino acids consist of individual domains. This Bacillus subtilis (strain 168) protein is Plipastatin synthase subunit C (ppsC).